The chain runs to 286 residues: Homoserine kinase (286 aa).

78 to 88 (PLARGLGSSSS) provides a ligand contact to ATP.

Belongs to the GHMP kinase family. Homoserine kinase subfamily.

The protein localises to the cytoplasm. It catalyses the reaction L-homoserine + ATP = O-phospho-L-homoserine + ADP + H(+). The protein operates within amino-acid biosynthesis; L-threonine biosynthesis; L-threonine from L-aspartate: step 4/5. Catalyzes the ATP-dependent phosphorylation of L-homoserine to L-homoserine phosphate. This Streptococcus suis (strain 98HAH33) protein is Homoserine kinase.